Here is a 278-residue protein sequence, read N- to C-terminus: Myb/SANT-like DNA-binding domain-containing protein 1 (278 aa).

Residues 1–27 (MVRGAGPGPSLSALSHPTGASGMAAAE) are disordered. The Myb-like domain maps to 44 to 129 (RNWTDAEMRG…PDWPYYLAID (86 aa)). A disordered region spans residues 138-168 (SCDGKLPDSQPPGPSTSQTEASLSPPAKSTP).

The chain is Myb/SANT-like DNA-binding domain-containing protein 1 (MSANTD1) from Homo sapiens (Human).